The sequence spans 308 residues: Serine/threonine-protein phosphatase 4 catalytic subunit (308 aa).

Mn(2+) is bound by residues aspartate 51, histidine 53, aspartate 79, and asparagine 111. The active-site Proton donor is histidine 112. Mn(2+)-binding residues include histidine 161 and histidine 235.

The protein belongs to the PPP phosphatase family. PP-4 (PP-X) subfamily. As to quaternary structure, catalytic subunit of the histone H2A phosphatase complex (HTP-C) containing PPH3, PSY2 and PSY4. Inactivated in a complex with phosphatase methylesterase PPE1 (PP2Ai). Interacts with phosphatase 2A activator RRD1, which can reactivate PP2Ai by dissociating the catalytic subunit from the complex. Interacts with SPT5 and TAP42. The cofactor is Mn(2+). In terms of processing, reversibly methyl esterified on Leu-308 by leucine carboxyl methyltransferase 1 (PPM1) and protein phosphatase methylesterase 1 (PPE1). Carboxyl methylation influences the affinity of the catalytic subunit for the different regulatory subunits, thereby modulating the PP2A holoenzyme's substrate specificity, enzyme activity and cellular localization.

It localises to the cytoplasm. The protein localises to the nucleus. The catalysed reaction is O-phospho-L-seryl-[protein] + H2O = L-seryl-[protein] + phosphate. The enzyme catalyses O-phospho-L-threonyl-[protein] + H2O = L-threonyl-[protein] + phosphate. Functionally, forms the histone H2A phosphatase complex in association with the regulatory subunits PSY2 and PSY4, which dephosphorylates H2AS128ph (gamma-H2A) that has been displaced from sites of DNA lesions in the double-stranded DNA break repair process. Dephosphorylation is necessary for efficient recovery from the DNA damage checkpoint. PPH3 is directly involved in the dephosphorylation and activation of the transcription factor GLN3 in response to nutrient availability. The chain is Serine/threonine-protein phosphatase 4 catalytic subunit (PPH3) from Saccharomyces cerevisiae (strain ATCC 204508 / S288c) (Baker's yeast).